We begin with the raw amino-acid sequence, 639 residues long: Threonine--tRNA ligase (639 aa).

A TGS domain is found at 1–62 (MYQLTLPDKS…ETDANIEVLT (62 aa)). The interval 246 to 537 (DHRKIGKELD…LIEHYEGKFP (292 aa)) is catalytic. 3 residues coordinate Zn(2+): cysteine 337, histidine 388, and histidine 514.

Belongs to the class-II aminoacyl-tRNA synthetase family. Homodimer. Requires Zn(2+) as cofactor.

Its subcellular location is the cytoplasm. The enzyme catalyses tRNA(Thr) + L-threonine + ATP = L-threonyl-tRNA(Thr) + AMP + diphosphate + H(+). In terms of biological role, catalyzes the attachment of threonine to tRNA(Thr) in a two-step reaction: L-threonine is first activated by ATP to form Thr-AMP and then transferred to the acceptor end of tRNA(Thr). Also edits incorrectly charged L-seryl-tRNA(Thr). In Leptospira borgpetersenii serovar Hardjo-bovis (strain JB197), this protein is Threonine--tRNA ligase.